The following is a 316-amino-acid chain: Bifunctional protein FolD (316 aa).

NADP(+) is bound by residues 165 to 167 (GKS) and Ile231.

Belongs to the tetrahydrofolate dehydrogenase/cyclohydrolase family. As to quaternary structure, homodimer.

It catalyses the reaction (6R)-5,10-methylene-5,6,7,8-tetrahydrofolate + NADP(+) = (6R)-5,10-methenyltetrahydrofolate + NADPH. It carries out the reaction (6R)-5,10-methenyltetrahydrofolate + H2O = (6R)-10-formyltetrahydrofolate + H(+). It functions in the pathway one-carbon metabolism; tetrahydrofolate interconversion. In terms of biological role, catalyzes the oxidation of 5,10-methylenetetrahydrofolate to 5,10-methenyltetrahydrofolate and then the hydrolysis of 5,10-methenyltetrahydrofolate to 10-formyltetrahydrofolate. The chain is Bifunctional protein FolD from Sphingobium chlorophenolicum.